The sequence spans 128 residues: uncharacterized protein (128 aa).

The VOC domain occupies 2–127 (KLLQIRLLVN…DHNLIEIYKM (126 aa)). Glu-48 and Glu-123 together coordinate Ni(2+).

It belongs to the glyoxalase I family.

This is an uncharacterized protein from Bacillus subtilis (strain 168).